The following is a 1185-amino-acid chain: Ubiquitin carboxyl-terminal hydrolase 36 (1185 aa).

The span at Thr126 to Asn169 shows a compositional bias: polar residues. Residues Thr126–Pro174 form a disordered region. Residues Ala199–Asp509 enclose the USP domain. Cys208 acts as the Nucleophile in catalysis. The active-site Proton acceptor is the His468. Phosphoserine is present on residues Ser552 and Ser554. Low complexity predominate over residues Ala642–Ser658. 4 disordered regions span residues Ala642–Ile804, His818–Glu975, Ala1056–Pro1122, and Asn1136–Ser1185. Over residues Ser670–Val683 the composition is skewed to acidic residues. A Phosphothreonine modification is found at Thr716. Phosphoserine occurs at positions 726 and 728. Composition is skewed to low complexity over residues Lys778–Asn797 and Gln836–Ser853. Ser867 carries the phosphoserine modification. Thr870 is subject to Phosphothreonine. A Phosphoserine modification is found at Ser873. Residues Asp891–Val920 are compositionally biased toward acidic residues. Polar residues-rich tracts occupy residues Thr924–Ser942 and Ser959–Glu975. Thr925 is subject to Phosphothreonine. A compositionally biased stretch (basic and acidic residues) spans Glu1062 to Ala1071. 2 stretches are compositionally biased toward low complexity: residues Gln1151 to Ala1161 and Gln1172 to Ser1185.

Belongs to the peptidase C19 family. Interacts with atms/PAF1, but not with CycT.

The protein localises to the nucleus. It is found in the nucleolus. The catalysed reaction is Thiol-dependent hydrolysis of ester, thioester, amide, peptide and isopeptide bonds formed by the C-terminal Gly of ubiquitin (a 76-residue protein attached to proteins as an intracellular targeting signal).. Required for maintaining multiple types of adult stem cells, including male and female germline, epithelial follicle cell and intestinal stem cells. May function as a transcriptional repressor by continually deubiquiting histone H2B at the promoters of genes critical for cellular differentiation, thereby preventing histone H3 'Lys-4' trimethylation (H3K4). Controls selective autophagy activation by ubiquitinated proteins. The sequence is that of Ubiquitin carboxyl-terminal hydrolase 36 (Usp36) from Drosophila mojavensis (Fruit fly).